The primary structure comprises 303 residues: Glycine--tRNA ligase alpha subunit (303 aa).

Belongs to the class-II aminoacyl-tRNA synthetase family. As to quaternary structure, tetramer of two alpha and two beta subunits.

Its subcellular location is the cytoplasm. The catalysed reaction is tRNA(Gly) + glycine + ATP = glycyl-tRNA(Gly) + AMP + diphosphate. This Salmonella arizonae (strain ATCC BAA-731 / CDC346-86 / RSK2980) protein is Glycine--tRNA ligase alpha subunit.